The following is a 700-amino-acid chain: Phenylalanine ammonia-lyase hkm12 (700 aa).

Y82 functions as the Proton donor/acceptor in the catalytic mechanism. The segment at residues 183 to 185 (ASG) is a cross-link (5-imidazolinone (Ala-Gly)). At S184 the chain carries 2,3-didehydroalanine (Ser). N242, Q325, R331, N361, K432, E460, and N463 together coordinate (E)-cinnamate.

This sequence belongs to the PAL/histidase family. Contains an active site 4-methylidene-imidazol-5-one (MIO), which is formed autocatalytically by cyclization and dehydration of residues Ala-Ser-Gly.

The enzyme catalyses L-phenylalanine = (E)-cinnamate + NH4(+). Its pathway is secondary metabolite biosynthesis. Functionally, phenylalanine ammonia-lyase; part of the gene cluster that mediates the biosynthesis of hancockiamides, an unusual new family of N-cinnamoylated piperazines. The NRPS hkm10 and the NmrA-like reductase hkm9 are proposed to convert two molecules of L-Phe to the intermediary piperazine called xenocockiamide A. Xenocockiamide A is then converted to hancockiamide D via a series of hydroxylations and O-methylations. The tyrosinase hkm6 may catalyze an aromatic hydroxylation, then the 2-oxoglutarate-dependent Fe(II) dioxygenase hkm4 and the FAD-dependent phenol hydroxylase hkm7 may catalyze consecutive hydroxylations to install 2 more hydroxy groups, and the methyltransferase hkm8 probably catalyzes two methylations using 2 molecules of S-adenosyl-L-methionine (SAM). The NRPS hkm11 activates and transfers trans-cinnamate supplied by the PAL hkm12 to hancockiamide D and produces hancockiamide A. NRPS Hkm11 has the flexibility to tolerate the bulky hancockiamide G as a substrate and the absence of the acetyl-transferase hkm3 opens up the opportunity for hkm11 to introduce a second N-cinnamoyl moiety. The cytochrome P450 monooxygenase hkm5 catalyzes the methylenedioxy bridge formation, converting hancockiamide A into hancockiamide G. Hkm5 can also convert hancockiamide B into hancockiamide C, and hancockiamide D into hancockiamide H. The N-acetyltransferase hkm3 finally transfers an acetyl group to 1-N of piperazine, converting hancockiamide A into hancockiamide B and hancockiamide G into hancockiamide C. The protein is Phenylalanine ammonia-lyase hkm12 of Aspergillus hancockii.